The chain runs to 290 residues: Glycine--tRNA ligase alpha subunit (290 aa).

The protein belongs to the class-II aminoacyl-tRNA synthetase family. As to quaternary structure, tetramer of two alpha and two beta subunits.

The protein resides in the cytoplasm. The catalysed reaction is tRNA(Gly) + glycine + ATP = glycyl-tRNA(Gly) + AMP + diphosphate. In Synechococcus sp. (strain CC9902), this protein is Glycine--tRNA ligase alpha subunit.